The primary structure comprises 197 residues: Probable 26S proteasome non-ATPase regulatory subunit 9 (197 aa).

One can recognise a PDZ domain in the interval 75–166 (KIVVEMENEN…KIIRVTVIRE (92 aa)).

The protein belongs to the proteasome subunit p27 family.

In terms of biological role, acts as a chaperone during the assembly of the 26S proteasome, specifically of the base subcomplex of the 19S regulatory complex (RC). This Caenorhabditis elegans protein is Probable 26S proteasome non-ATPase regulatory subunit 9 (psmd-9).